A 695-amino-acid polypeptide reads, in one-letter code: D-(-)-3-hydroxybutyrate oligomer hydrolase (695 aa).

An N-terminal signal peptide occupies residues Met1 to Ala17. The Charge relay system role is filled by Ser308.

The protein belongs to the D-(-)-3-hydroxybutyrate oligomer hydrolase family.

The protein localises to the secreted. It carries out the reaction (3R)-hydroxybutanoate dimer + H2O = 2 (R)-3-hydroxybutanoate + H(+). It participates in lipid metabolism; butanoate metabolism. In terms of biological role, participates in the degradation of poly-3-hydroxybutyrate (PHB). It works downstream of poly(3-hydroxybutyrate) depolymerase, hydrolyzing D(-)-3-hydroxybutyrate oligomers of various length (3HB-oligomers) into 3HB-monomers. The polypeptide is D-(-)-3-hydroxybutyrate oligomer hydrolase (Burkholderia ambifaria (strain ATCC BAA-244 / DSM 16087 / CCUG 44356 / LMG 19182 / AMMD) (Burkholderia cepacia (strain AMMD))).